Consider the following 262-residue polypeptide: Putative outer membrane protein CPn_1034/CP_0818/CPj1034/CpB1074 (262 aa).

Residues Met1 to Tyr17 form the signal peptide.

It is found in the cell outer membrane. In Chlamydia pneumoniae (Chlamydophila pneumoniae), this protein is Putative outer membrane protein CPn_1034/CP_0818/CPj1034/CpB1074.